A 74-amino-acid polypeptide reads, in one-letter code: Translation initiation factor IF-1, chloroplastic (74 aa).

In terms of domain architecture, S1-like spans 1–72 (MEKQNIIEME…TKGRITYRLR (72 aa)).

It belongs to the IF-1 family. In terms of assembly, component of the 30S ribosomal translation pre-initiation complex which assembles on the 30S ribosome in the order IF-2 and IF-3, IF-1 and N-formylmethionyl-tRNA(fMet); mRNA recruitment can occur at any time during PIC assembly.

Its subcellular location is the plastid. The protein resides in the chloroplast. Its function is as follows. One of the essential components for the initiation of protein synthesis. Stabilizes the binding of IF-2 and IF-3 on the 30S subunit to which N-formylmethionyl-tRNA(fMet) subsequently binds. Helps modulate mRNA selection, yielding the 30S pre-initiation complex (PIC). Upon addition of the 50S ribosomal subunit IF-1, IF-2 and IF-3 are released leaving the mature 70S translation initiation complex. This Chlorokybus atmophyticus (Soil alga) protein is Translation initiation factor IF-1, chloroplastic.